A 397-amino-acid polypeptide reads, in one-letter code: DNA-binding protein (397 aa).

Zn(2+) contacts are provided by cysteine 116 and histidine 118. Residues 129 to 161 (IEMAATSESGVAALKEGRGAVEINRWGRQVVKI) form a flexible loop region. Residues cysteine 169, cysteine 185, cysteine 225, cysteine 227, cysteine 276, and cysteine 289 each contribute to the Zn(2+) site. Residues 335-397 (ALLPEGSVNE…IVLESSEEDE (63 aa)) are C-terminal arm, DBP binding. A disordered region spans residues 338-397 (PEGSVNEDENPFGLDNSEDEEEVVPPSPPSPARKRTRTTVAEVHHKKKKKIVLESSEEDE). The span at 342–360 (VNEDENPFGLDNSEDEEEV) shows a compositional bias: acidic residues.

It belongs to the adenoviridae E2A DNA-binding protein family. In terms of assembly, homomultimerizes on viral ssDNA bound to pTP. Forms a initiation complex with viral polymerase, pTP and hosts NFIA and POU2F1/OCT1. Interacts with host SRCAP.

The protein resides in the host nucleus. Its function is as follows. Plays a role in the elongation phase of viral strand displacement replication by unwinding the template in an ATP-independent fashion, employing its capacity to form multimers. Also enhances the rate of initiation. Released from template upon second strand synthesis. Assembles in complex with viral pTP, viral pol, host NFIA and host POU2F1/OCT1 on viral origin of replication. Covers the whole ssDNA genome during synthesis. The complementary strand synthesis induces its relese from DNA template. May inhibit cellular transcription mediated by the interaction between host SRCAP and CBP. This chain is DNA-binding protein, found in Snake adenovirus serotype 1 (SnAdV-1).